The sequence spans 238 residues: DNA repair protein RecO (238 aa).

The protein belongs to the RecO family.

Functionally, involved in DNA repair and RecF pathway recombination. The chain is DNA repair protein RecO from Anaplasma marginale (strain St. Maries).